A 267-amino-acid polypeptide reads, in one-letter code: S-adenosylmethionine decarboxylase proenzyme (267 aa).

The active-site Schiff-base intermediate with substrate; via pyruvic acid is S114. A Pyruvic acid (Ser); by autocatalysis modification is found at S114. H119 acts as the Proton acceptor; for processing activity in catalysis. The Proton donor; for catalytic activity role is filled by C142.

Belongs to the prokaryotic AdoMetDC family. Type 2 subfamily. As to quaternary structure, heterooctamer of four alpha and four beta chains arranged as a tetramer of alpha/beta heterodimers. The cofactor is pyruvate. Is synthesized initially as an inactive proenzyme. Formation of the active enzyme involves a self-maturation process in which the active site pyruvoyl group is generated from an internal serine residue via an autocatalytic post-translational modification. Two non-identical subunits are generated from the proenzyme in this reaction, and the pyruvate is formed at the N-terminus of the alpha chain, which is derived from the carboxyl end of the proenzyme. The post-translation cleavage follows an unusual pathway, termed non-hydrolytic serinolysis, in which the side chain hydroxyl group of the serine supplies its oxygen atom to form the C-terminus of the beta chain, while the remainder of the serine residue undergoes an oxidative deamination to produce ammonia and the pyruvoyl group blocking the N-terminus of the alpha chain.

It carries out the reaction S-adenosyl-L-methionine + H(+) = S-adenosyl 3-(methylsulfanyl)propylamine + CO2. Its pathway is amine and polyamine biosynthesis; S-adenosylmethioninamine biosynthesis; S-adenosylmethioninamine from S-adenosyl-L-methionine: step 1/1. Catalyzes the decarboxylation of S-adenosylmethionine to S-adenosylmethioninamine (dcAdoMet), the propylamine donor required for the synthesis of the polyamines spermine and spermidine from the diamine putrescine. This Erwinia tasmaniensis (strain DSM 17950 / CFBP 7177 / CIP 109463 / NCPPB 4357 / Et1/99) protein is S-adenosylmethionine decarboxylase proenzyme.